Reading from the N-terminus, the 251-residue chain is Phosphoribosylaminoimidazole-succinocarboxamide synthase (251 aa).

It belongs to the SAICAR synthetase family.

It catalyses the reaction 5-amino-1-(5-phospho-D-ribosyl)imidazole-4-carboxylate + L-aspartate + ATP = (2S)-2-[5-amino-1-(5-phospho-beta-D-ribosyl)imidazole-4-carboxamido]succinate + ADP + phosphate + 2 H(+). The protein operates within purine metabolism; IMP biosynthesis via de novo pathway; 5-amino-1-(5-phospho-D-ribosyl)imidazole-4-carboxamide from 5-amino-1-(5-phospho-D-ribosyl)imidazole-4-carboxylate: step 1/2. The chain is Phosphoribosylaminoimidazole-succinocarboxamide synthase from Phenylobacterium zucineum (strain HLK1).